A 611-amino-acid chain; its full sequence is Protein halfway (611 aa).

An N-terminal signal peptide occupies residues 1–22; that stretch reads MLAYTHGTWLLLLLLLVAGACA. 3 disordered regions span residues 31–64, 90–132, and 154–185; these read DPAA…LKED, SLAE…AAPE, and GRAE…CQCR. The span at 43-59 shows a compositional bias: basic residues; that stretch reads AHAHPQARHHHHAHPHA. Polar residues predominate over residues 90–101; it reads SLAETQSMSDPG. The segment covering 102-123 has biased composition (low complexity); that stretch reads SVTDTTSTSTSHSTSTTSTTSP. Over residues 159–183 the composition is skewed to polar residues; it reads SEGQGSTVAQSEAQNRGGQGNSQCQ. 4 N-linked (GlcNAc...) asparagine glycosylation sites follow: asparagine 221, asparagine 246, asparagine 264, and asparagine 269. LRR repeat units lie at residues 236–257, 259–280, 283–304, and 313–334; these read SLQS…FPRL, ALKC…AVKD, HLEF…NQNK, and NMRM…NFLN. Positions 361–416 constitute an LRRNT domain; the sequence is ENRKRCVTNCPVIPNYGSCNCTLENIMIIQDNQSKPQCHVDCSNLGLVELPQRLPD. LRR repeat units lie at residues 417–438, 443–464, and 468–489; these read NTFM…FHTN, NINR…EGTK, and TFQR…FLNN. Residues 505–554 form the LRRCT domain; it reads NKLQCDCNSAKTLQNWLKERSSDIPDYMEIRCRNMPQRVIELQEAKLCQS.

Has a role in the ecdysone induced cascade; probably indirect control of 'late' ecdysone genes. In Drosophila melanogaster (Fruit fly), this protein is Protein halfway.